Here is a 384-residue protein sequence, read N- to C-terminus: GTPase Obg (384 aa).

Residues 1 to 159 (MKFIDEAKIE…RSLQLELKVL (159 aa)) enclose the Obg domain. Disordered stretches follow at residues 20 to 46 (ATSF…GSVW) and 129 to 149 (HFKS…EGET). A compositionally biased stretch (gly residues) spans 33–43 (GPDGGDGGKGG). The span at 130 to 143 (FKSSVNRAPKQSTP) shows a compositional bias: polar residues. The region spanning 160 to 348 (ADVGLLGMPN…LVHQINQYLA (189 aa)) is the OBG-type G domain. GTP contacts are provided by residues 166 to 173 (GMPNAGKS), 191 to 195 (FTTLH), 213 to 216 (DIPG), 284 to 287 (NKLD), and 329 to 331 (SAL). Mg(2+) is bound by residues serine 173 and threonine 193.

This sequence belongs to the TRAFAC class OBG-HflX-like GTPase superfamily. OBG GTPase family. Monomer. Requires Mg(2+) as cofactor.

It localises to the cytoplasm. Its function is as follows. An essential GTPase which binds GTP, GDP and possibly (p)ppGpp with moderate affinity, with high nucleotide exchange rates and a fairly low GTP hydrolysis rate; the half-life of the GTP-bound state is about 50 minutes. Plays a role in control of the cell cycle, stress response, ribosome biogenesis and in those bacteria that undergo differentiation, in morphogenesis control. This chain is GTPase Obg, found in Neisseria gonorrhoeae (strain ATCC 700825 / FA 1090).